Reading from the N-terminus, the 243-residue chain is 7-cyano-7-deazaguanine synthase (243 aa).

18 to 28 (FSGGQDSATCL) is an ATP binding site. Residues C206, C221, C224, and C227 each contribute to the Zn(2+) site.

Belongs to the QueC family. It depends on Zn(2+) as a cofactor.

The enzyme catalyses 7-carboxy-7-deazaguanine + NH4(+) + ATP = 7-cyano-7-deazaguanine + ADP + phosphate + H2O + H(+). The protein operates within purine metabolism; 7-cyano-7-deazaguanine biosynthesis. Its function is as follows. Catalyzes the ATP-dependent conversion of 7-carboxy-7-deazaguanine (CDG) to 7-cyano-7-deazaguanine (preQ(0)). The protein is 7-cyano-7-deazaguanine synthase of Methylorubrum extorquens (strain CM4 / NCIMB 13688) (Methylobacterium extorquens).